We begin with the raw amino-acid sequence, 163 residues long: Transcription elongation factor GreB (163 aa).

Residues 54 to 76 adopt a coiled-coil conformation; sequence GKRRMREIDRRIRFLTKRLEAAV.

The protein belongs to the GreA/GreB family. GreB subfamily.

Necessary for efficient RNA polymerase transcription elongation past template-encoded arresting sites. The arresting sites in DNA have the property of trapping a certain fraction of elongating RNA polymerases that pass through, resulting in locked ternary complexes. Cleavage of the nascent transcript by cleavage factors such as GreA or GreB allows the resumption of elongation from the new 3'terminus. GreB releases sequences of up to 9 nucleotides in length. This is Transcription elongation factor GreB from Neisseria meningitidis serogroup B (strain ATCC BAA-335 / MC58).